A 102-amino-acid polypeptide reads, in one-letter code: NADH-quinone oxidoreductase subunit K (102 aa).

3 helical membrane passes run 5 to 25 (LSHY…GIFL), 31 to 51 (IVIL…MVAF), and 65 to 85 (LFIL…LVVF).

The protein belongs to the complex I subunit 4L family. NDH-1 is composed of 14 different subunits. Subunits NuoA, H, J, K, L, M, N constitute the membrane sector of the complex.

The protein resides in the cell inner membrane. The catalysed reaction is a quinone + NADH + 5 H(+)(in) = a quinol + NAD(+) + 4 H(+)(out). Its function is as follows. NDH-1 shuttles electrons from NADH, via FMN and iron-sulfur (Fe-S) centers, to quinones in the respiratory chain. The immediate electron acceptor for the enzyme in this species is believed to be ubiquinone. Couples the redox reaction to proton translocation (for every two electrons transferred, four hydrogen ions are translocated across the cytoplasmic membrane), and thus conserves the redox energy in a proton gradient. This Rhizobium leguminosarum bv. trifolii (strain WSM2304) protein is NADH-quinone oxidoreductase subunit K.